The following is an 82-amino-acid chain: MIECSWLVISAGVDSSDLAKRGESLIRQSSNRYLTTVRIAFRAKQRRFDDFDGLLEESSVKPVQRAIVELSDEQDQPDLLPG.

The protein belongs to the RNA polymerase subunit omega family. In cyanobacteria the RNAP catalytic core is composed of 2 alpha, 1 beta, 1 beta', 1 gamma and 1 omega subunit. When a sigma factor is associated with the core the holoenzyme is formed, which can initiate transcription.

The enzyme catalyses RNA(n) + a ribonucleoside 5'-triphosphate = RNA(n+1) + diphosphate. Functionally, promotes RNA polymerase assembly. Latches the N- and C-terminal regions of the beta' subunit thereby facilitating its interaction with the beta and alpha subunits. The chain is DNA-directed RNA polymerase subunit omega from Synechococcus sp. (strain CC9902).